Here is a 239-residue protein sequence, read N- to C-terminus: Large ribosomal subunit protein uL1 (239 aa).

It belongs to the universal ribosomal protein uL1 family. As to quaternary structure, part of the 50S ribosomal subunit.

In terms of biological role, binds directly to 23S rRNA. The L1 stalk is quite mobile in the ribosome, and is involved in E site tRNA release. Protein L1 is also a translational repressor protein, it controls the translation of the L11 operon by binding to its mRNA. In Rhodococcus erythropolis (strain PR4 / NBRC 100887), this protein is Large ribosomal subunit protein uL1.